A 344-amino-acid polypeptide reads, in one-letter code: Phosphoribosylformylglycinamidine cyclo-ligase (344 aa).

The protein belongs to the AIR synthase family.

The protein resides in the cytoplasm. The catalysed reaction is 2-formamido-N(1)-(5-O-phospho-beta-D-ribosyl)acetamidine + ATP = 5-amino-1-(5-phospho-beta-D-ribosyl)imidazole + ADP + phosphate + H(+). The protein operates within purine metabolism; IMP biosynthesis via de novo pathway; 5-amino-1-(5-phospho-D-ribosyl)imidazole from N(2)-formyl-N(1)-(5-phospho-D-ribosyl)glycinamide: step 2/2. In Laribacter hongkongensis (strain HLHK9), this protein is Phosphoribosylformylglycinamidine cyclo-ligase.